Reading from the N-terminus, the 316-residue chain is Olfactory receptor 52A5 (316 aa).

Residues 1-27 (MPTFNGSVFMPSAFILIGIPGLESVQC) are Extracellular-facing. Asparagine 5 carries N-linked (GlcNAc...) asparagine glycosylation. A helical transmembrane segment spans residues 28 to 48 (WIGIPFSAMYLIGVIGNSLIL). At 49-56 (VIIKYENS) the chain is on the cytoplasmic side. Residues 57-77 (LHIPMYIFLAMLAATDIALNT) form a helical membrane-spanning segment. At 78-101 (CILPKMLGIFWFHLPEISFDACLF) the chain is on the extracellular side. A helical membrane pass occupies residues 102–122 (QMWLIHSFQAIESGILLAMAL). Topologically, residues 123–141 (DRYVAICIPLRHATIFSQQ) are cytoplasmic. The chain crosses the membrane as a helical span at residues 142–162 (FLTHIGLGVTLRAAILIIPSL). Residues 163–199 (GLIKCCLKHYRTTVISHSYCEHMAIVKLATEDIRVNK) are Extracellular-facing. The chain crosses the membrane as a helical span at residues 200-220 (IYGLFVAFAILGFDIIFITLS). At 221–240 (YVQIFITVFQLPQKEARFKA) the chain is on the cytoplasmic side. The chain crosses the membrane as a helical span at residues 241-261 (FNTCIAHICVFLQFYLLAFFS). At 262 to 276 (FFTHRFGSHIPPYIH) the chain is on the extracellular side. Residues 277-297 (ILLSNLYLLVPPFLNPIVYGV) traverse the membrane as a helical segment. The Cytoplasmic segment spans residues 298–316 (KTKQIRDHIVKVFFFKKVT).

It belongs to the G-protein coupled receptor 1 family.

The protein localises to the cell membrane. Functionally, odorant receptor. The chain is Olfactory receptor 52A5 (OR52A5) from Homo sapiens (Human).